The following is a 592-amino-acid chain: Protein kinase C zeta type (592 aa).

Residues 15-98 (RVRLKAHYGG…EGLIIHVFPS (84 aa)) enclose the PB1 domain. Residues 79 to 145 (AFRLARQCRD…KRFNRRAYCG (67 aa)) form an interaction with SQSTM1 region. Residues 130 to 180 (GHLFQAKRFNRRAYCGQCSERIWGLARQGYRCINCKLLVHKRCHGLVPLTC) form a Phorbol-ester/DAG-type zinc finger. A Protein kinase domain is found at 252 to 518 (FDLIRVIGRG…FSDIKSHAFF (267 aa)). ATP is bound by residues 258–266 (IGRGSYAKV) and K281. The Proton acceptor role is filled by D376. The residue at position 410 (T410) is a Phosphothreonine; by PDPK1 and PI3K. The AGC-kinase C-terminal domain maps to 519-590 (RSIDWDLLEK…INPLLLSTEE (72 aa)). T560 carries the post-translational modification Phosphothreonine. S591 is modified (phosphoserine).

It belongs to the protein kinase superfamily. AGC Ser/Thr protein kinase family. PKC subfamily. In terms of assembly, forms a ternary complex with SQSTM1 and KCNAB2. Forms another ternary complex with SQSTM1 and GABRR3. Forms a complex with SQSTM1 and MAP2K5. Interacts with PARD6A, PARD6B, PARD6G and SQSTM1. Part of a complex with PARD3, PARD6A or PARD6B or PARD6G and CDC42 or RAC1. Interacts with ADAP1/CENTA1. Forms a ternary complex composed of SQSTM1 and PAWR. Interacts directly with SQSTM1. Interacts with IKBKB. Interacts (via the protein kinase domain) with WWC1. Forms a tripartite complex with WWC1 and DDR1, but predominantly in the absence of collagen. Component of the Par polarity complex, composed of at least phosphorylated PRKCZ, PARD3 and TIAM1. Interacts with PDPK1 (via N-terminal region). Interacts with WDFY2 (via WD repeats 1-3). Interacts with VAMP2. Forms a complex with WDFY2 and VAMP2. Interacts with APPL1. Interacts with WWC1, WWC2 and WWC3. Post-translationally, CDH5 is required for its phosphorylation at Thr-410. Phosphorylated by protein kinase PDPK1; phosphorylation is inhibited by the apoptotic C-terminal cleavage product of PKN2. Phosphorylation at Thr-410 by PI3K activates the kinase. Expressed in brain, and to a lesser extent in lung, kidney and testis.

The protein resides in the cytoplasm. Its subcellular location is the endosome. The protein localises to the cell junction. It localises to the membrane. The enzyme catalyses L-seryl-[protein] + ATP = O-phospho-L-seryl-[protein] + ADP + H(+). It catalyses the reaction L-threonyl-[protein] + ATP = O-phospho-L-threonyl-[protein] + ADP + H(+). Atypical PKCs (PRKCI and PRKCZ) exhibit an elevated basal enzymatic activity (that may be due to the interaction with SMG1 or SQSTM1) and are not regulated by diacylglycerol, phosphatidylserine, phorbol esters or calcium ions. Two specific sites, Thr-410 (activation loop of the kinase domain) and Thr-560 (turn motif), need to be phosphorylated for its full activation. Phosphatidylinositol 3,4,5-trisphosphate might be a physiological activator. Isoform 2: Constitutively active. In terms of biological role, calcium- and diacylglycerol-independent serine/threonine-protein kinase that functions in phosphatidylinositol 3-kinase (PI3K) pathway and mitogen-activated protein (MAP) kinase cascade, and is involved in NF-kappa-B activation, mitogenic signaling, cell proliferation, cell polarity, inflammatory response and maintenance of long-term potentiation (LTP). Upon lipopolysaccharide (LPS) treatment in macrophages, or following mitogenic stimuli, functions downstream of PI3K to activate MAP2K1/MEK1-MAPK1/ERK2 signaling cascade independently of RAF1 activation. Required for insulin-dependent activation of AKT3, but may function as an adapter rather than a direct activator. Upon insulin treatment may act as a downstream effector of PI3K and contribute to the activation of translocation of the glucose transporter SLC2A4/GLUT4 and subsequent glucose transport in adipocytes. In EGF-induced cells, binds and activates MAP2K5/MEK5-MAPK7/ERK5 independently of its kinase activity and can activate JUN promoter through MEF2C. Through binding with SQSTM1/p62, functions in interleukin-1 signaling and activation of NF-kappa-B with the specific adapters RIPK1 and TRAF6. Participates in TNF-dependent transactivation of NF-kappa-B by phosphorylating and activating IKBKB kinase, which in turn leads to the degradation of NF-kappa-B inhibitors. In migrating astrocytes, forms a cytoplasmic complex with PARD6A and is recruited by CDC42 to function in the establishment of cell polarity along with the microtubule motor and dynein. In association with FEZ1, stimulates neuronal differentiation in PC12 cells. In the inflammatory response, is required for the T-helper 2 (Th2) differentiation process, including interleukin production, efficient activation of JAK1 and the subsequent phosphorylation and nuclear translocation of STAT6. May be involved in development of allergic airway inflammation (asthma), a process dependent on Th2 immune response. In the NF-kappa-B-mediated inflammatory response, can relieve SETD6-dependent repression of NF-kappa-B target genes by phosphorylating the RELA subunit at 'Ser-311'. Phosphorylates VAMP2 in vitro. Phosphorylates and activates LRRK1, which phosphorylates RAB proteins involved in intracellular trafficking. Involved in late synaptic long term potention phase in CA1 hippocampal cells and long term memory maintenance. The protein is Protein kinase C zeta type (PRKCZ) of Homo sapiens (Human).